The primary structure comprises 142 residues: MVLSPDDKKHVKAAWGKVGEHAGEYGAEALERMFLSFPTTKTYFPHFDLSHGSDQVNKHGKKVADALTLAVGHVDDMPQALSKLSDLHAHKLRVDPVNFKLLSHCLLVTLAAHLPAEFTPAVHASLDKFLASVSTVLTSKYR.

The region spanning valine 2–arginine 142 is the Globin domain. The residue at position 4 (serine 4) is a Phosphoserine. An N6-succinyllysine mark is found at lysine 8 and lysine 12. Lysine 17 carries the post-translational modification N6-acetyllysine; alternate. N6-succinyllysine; alternate is present on lysine 17. Tyrosine 25 carries the phosphotyrosine modification. A Phosphoserine modification is found at serine 36. Lysine 41 carries the N6-succinyllysine modification. Serine 50 is modified (phosphoserine). Histidine 59 contacts O2. Position 88 (histidine 88) interacts with heme b. At serine 103 the chain carries Phosphoserine. Threonine 109 bears the Phosphothreonine mark. Serine 125 and serine 132 each carry phosphoserine. 2 positions are modified to phosphothreonine: threonine 135 and threonine 138. Serine 139 bears the Phosphoserine mark.

It belongs to the globin family. As to quaternary structure, heterotetramer of two alpha chains and two beta chains. In terms of tissue distribution, red blood cells.

Involved in oxygen transport from the lung to the various peripheral tissues. Functionally, hemopressin acts as an antagonist peptide of the cannabinoid receptor CNR1. Hemopressin-binding efficiently blocks cannabinoid receptor CNR1 and subsequent signaling. In Papio anubis (Olive baboon), this protein is Hemoglobin subunit alpha (HBA).